The chain runs to 119 residues: Beta-2-microglobulin (119 aa).

Residues 1 to 20 (MARFVVVALLVLLSVSDLEA) form the signal peptide. The region spanning 25 to 114 (PKIQVYSRYP…VTFLTPKTVK (90 aa)) is the Ig-like C1-type domain. Cysteine 45 and cysteine 100 are joined by a disulfide.

Belongs to the beta-2-microglobulin family. As to quaternary structure, heterodimer of an alpha chain and a beta chain. Beta-2-microglobulin is the beta-chain of major histocompatibility complex class I molecules.

The protein localises to the secreted. Component of the class I major histocompatibility complex (MHC). Involved in the presentation of peptide antigens to the immune system. The polypeptide is Beta-2-microglobulin (B2M) (Leontocebus fuscicollis (Brown-mantled tamarin)).